Here is a 463-residue protein sequence, read N- to C-terminus: Cysteine--tRNA ligase (463 aa).

Cys27 is a binding site for Zn(2+). Positions 29 to 39 match the 'HIGH' region motif; sequence ATVQGLPHIGH. Zn(2+) is bound by residues Cys205, His230, and Glu234. Residues 261–265 carry the 'KMSKS' region motif; sequence KMSKS. An ATP-binding site is contributed by Lys264.

This sequence belongs to the class-I aminoacyl-tRNA synthetase family. In terms of assembly, monomer. The cofactor is Zn(2+).

It localises to the cytoplasm. It catalyses the reaction tRNA(Cys) + L-cysteine + ATP = L-cysteinyl-tRNA(Cys) + AMP + diphosphate. The polypeptide is Cysteine--tRNA ligase (Mycolicibacterium vanbaalenii (strain DSM 7251 / JCM 13017 / BCRC 16820 / KCTC 9966 / NRRL B-24157 / PYR-1) (Mycobacterium vanbaalenii)).